The chain runs to 173 residues: Probable DNA-directed RNA polymerase subunit delta (173 aa).

The HTH HARE-type domain occupies 14–81; sequence LSMIELGVKI…GSGMWGLKRW (68 aa). Residues 86-173 form a disordered region; sequence QAEEEITEEP…EDENDDDNTR (88 aa). Acidic residues predominate over residues 109 to 173; the sequence is IDDVDDDLDV…EDENDDDNTR (65 aa).

This sequence belongs to the RpoE family. In terms of assembly, RNAP is composed of a core of 2 alpha, a beta and a beta' subunits. The core is associated with a delta subunit and one of several sigma factors.

Functionally, participates in both the initiation and recycling phases of transcription. In the presence of the delta subunit, RNAP displays an increased specificity of transcription, a decreased affinity for nucleic acids, and an increased efficiency of RNA synthesis because of enhanced recycling. This chain is Probable DNA-directed RNA polymerase subunit delta, found in Oceanobacillus iheyensis (strain DSM 14371 / CIP 107618 / JCM 11309 / KCTC 3954 / HTE831).